Reading from the N-terminus, the 1299-residue chain is GRB10-interacting GYF protein 2 (1299 aa).

Ala-2 is subject to N-acetylalanine. Residues Ser-19, Ser-26, and Ser-30 each carry the phosphoserine modification. Positions 40-50 (DYRYGREEMLA) match the 4EHP-binding motif motif. An omega-N-methylarginine mark is found at Arg-107, Arg-118, and Arg-120. The tract at residues 112–131 (TVVGAPRGRSSSRGRGRGRG) is disordered. At Ser-139 the chain carries Phosphoserine. 3 disordered regions span residues 147–195 (FGRG…RKHE), 214–247 (EDED…GWRE), and 266–433 (RGYR…VADV). Omega-N-methylarginine is present on Arg-149. Over residues 151 to 182 (GGREMHRSQSWEERGDRRFEKPGRKDVGRPNF) the composition is skewed to basic and acidic residues. Residues Ser-160, Ser-189, and Ser-236 each carry the phosphoserine modification. A compositionally biased stretch (basic and acidic residues) spans 225–247 (SRRDGERWRPHSPDGPRSAGWRE). Residues 280-310 (DDRDSLPEWCLEDAEEEMGTFDSSGAFLSLK) carry the DDX6 binding motif motif. The segment covering 289-298 (CLEDAEEEMG) has biased composition (acidic residues). Basic and acidic residues-rich tracts occupy residues 312-329 (VQKE…RPVD) and 338-363 (EGSH…DRVG). The segment covering 369–392 (ETPQTSSSSARPGTPSDHQSQEAS) has biased composition (polar residues). Position 382 is a phosphothreonine (Thr-382). Ser-388 carries the post-translational modification Phosphoserine. Positions 393–414 (QFERKDEPKTEQTEKAEEETRM) are enriched in basic and acidic residues. Residues 533-581 (MQKWYYKDPQGEIQGPFNNQEMAEWFQAGYFTMSLLVKRACDESFQPLG) form the GYF domain. The interval 547–563 (GPFNNQEMAEWFQAGYF) is required for GRB10-binding. Ser-593 carries the post-translational modification Phosphoserine. Disordered regions lie at residues 733–793 (KAAK…QEEA), 845–866 (EEAA…ENRL), 872–891 (AARL…EVQR), 917–936 (QLAQ…SNTT), 957–997 (ERQL…KPSG), 1009–1048 (EARQ…VWGS), and 1084–1112 (KEVG…NRQN). A required for interaction with SARS-CoV-2 non-structural protein 2 (nsp2) region spans residues 860–919 (RLEENRLRMEEEAARLRHEEEERKRKELEVQRQKELMRQRQQQQEALRRLQQQQQQQQLA). Residues 924-936 (PSSSTWGQQSNTT) show a composition bias toward polar residues. The segment covering 957–972 (ERQLREEQRRQQRELM) has biased composition (basic and acidic residues). Ser-993 carries the phosphoserine modification. The span at 1013–1025 (MQKQQQQQQQHQQ) shows a compositional bias: low complexity. Residues 1026 to 1048 (PNRARNNTHSNLHTSIGNSVWGS) show a composition bias toward polar residues. The segment covering 1090-1104 (NSTNKNKNNASLSKS) has biased composition (low complexity). Lys-1123 participates in a covalent cross-link: Glycyl lysine isopeptide (Lys-Gly) (interchain with G-Cter in SUMO2). Disordered stretches follow at residues 1195–1230 (RAKQ…QQDS) and 1247–1271 (QSNN…KMVR). Residues 1202–1217 (QQRQQQQLPQQQQQQP) show a composition bias toward low complexity. Ser-1284 is subject to Phosphoserine.

Belongs to the GIGYF family. Component of the 4EHP-GYF2 complex, at least composed of EIF4E2, GIGYF2 and ZNF598. Interacts (via the 4EHP-binding motif) with EIF4E2; the interaction is direct. Interacts with ZFP36/TTP (via P-P-P-P-G repeats); the interaction is direct. Interacts with GRB10. Interacts (via DDX6 motif) with DDX6 (via RecA-like domain 2). In terms of assembly, (Microbial infection) Interacts with SARS coronavirus-2/SARS-CoV-2 non-structural protein 2 (nsp2); the interaction enhances GIGYF2 binding to EIF4E2.

In terms of biological role, key component of the 4EHP-GYF2 complex, a multiprotein complex that acts as a repressor of translation initiation. In the 4EHP-GYF2 complex, acts as a factor that bridges EIF4E2 to ZFP36/TTP, linking translation repression with mRNA decay. Also recruits and bridges the association of the 4EHP complex with the decapping effector protein DDX6, which is required for the ZFP36/TTP-mediated down-regulation of AU-rich mRNA. May act cooperatively with GRB10 to regulate tyrosine kinase receptor signaling, including IGF1 and insulin receptors. In association with EIF4E2, assists ribosome-associated quality control (RQC) by sequestering the mRNA cap, blocking ribosome initiation and decreasing the translational load on problematic messages. Part of a pathway that works in parallel to RQC-mediated degradation of the stalled nascent polypeptide. GIGYF2 and EIF4E2 work downstream and independently of ZNF598, which seems to work as a scaffold that can recruit them to faulty mRNA even if alternative recruitment mechanisms may exist. Its function is as follows. (Microbial infection) Upon SARS coronavirus-2/SARS-CoV-2 infection, the interaction with non-structural protein 2 (nsp2) enhances GIGYF2 binding to EIF4E2 and increases repression of translation initiation of genes involved in antiviral innate immune response such as IFNB1. This is GRB10-interacting GYF protein 2 from Homo sapiens (Human).